We begin with the raw amino-acid sequence, 264 residues long: Thymidylate synthase (264 aa).

DUMP is bound at residue Arg21. Position 51 (His51) interacts with (6R)-5,10-methylene-5,6,7,8-tetrahydrofolate. DUMP is bound at residue Arg126–Arg127. Residue Cys146 is the Nucleophile of the active site. DUMP is bound by residues Arg166–Asp169, Asn177, and His207–Tyr209. Asp169 contributes to the (6R)-5,10-methylene-5,6,7,8-tetrahydrofolate binding site. Ala263 is a (6R)-5,10-methylene-5,6,7,8-tetrahydrofolate binding site.

Belongs to the thymidylate synthase family. Bacterial-type ThyA subfamily. In terms of assembly, homodimer.

The protein localises to the cytoplasm. The catalysed reaction is dUMP + (6R)-5,10-methylene-5,6,7,8-tetrahydrofolate = 7,8-dihydrofolate + dTMP. Its pathway is pyrimidine metabolism; dTTP biosynthesis. In terms of biological role, catalyzes the reductive methylation of 2'-deoxyuridine-5'-monophosphate (dUMP) to 2'-deoxythymidine-5'-monophosphate (dTMP) while utilizing 5,10-methylenetetrahydrofolate (mTHF) as the methyl donor and reductant in the reaction, yielding dihydrofolate (DHF) as a by-product. This enzymatic reaction provides an intracellular de novo source of dTMP, an essential precursor for DNA biosynthesis. This Methylobacillus flagellatus (strain ATCC 51484 / DSM 6875 / VKM B-1610 / KT) protein is Thymidylate synthase.